A 207-amino-acid chain; its full sequence is Large ribosomal subunit protein uL4 (207 aa).

It belongs to the universal ribosomal protein uL4 family. As to quaternary structure, part of the 50S ribosomal subunit.

Functionally, one of the primary rRNA binding proteins, this protein initially binds near the 5'-end of the 23S rRNA. It is important during the early stages of 50S assembly. It makes multiple contacts with different domains of the 23S rRNA in the assembled 50S subunit and ribosome. Its function is as follows. Forms part of the polypeptide exit tunnel. The polypeptide is Large ribosomal subunit protein uL4 (Erythrobacter litoralis (strain HTCC2594)).